A 520-amino-acid polypeptide reads, in one-letter code: Cobyric acid synthase (520 aa).

The 212-residue stretch at 254–465 (ELDIAVVRLP…IHGILDNDGL (212 aa)) folds into the GATase cobBQ-type domain. The active-site Nucleophile is C335. H457 is a catalytic residue.

This sequence belongs to the CobB/CobQ family. CobQ subfamily.

The protein operates within cofactor biosynthesis; adenosylcobalamin biosynthesis. Catalyzes amidations at positions B, D, E, and G on adenosylcobyrinic A,C-diamide. NH(2) groups are provided by glutamine, and one molecule of ATP is hydrogenolyzed for each amidation. This is Cobyric acid synthase from Sorangium cellulosum (strain So ce56) (Polyangium cellulosum (strain So ce56)).